A 339-amino-acid polypeptide reads, in one-letter code: Ketol-acid reductoisomerase (NADP(+)) (339 aa).

Residues 1–182 (MRVYYDRDAD…GGGRAGIIET (182 aa)) form the KARI N-terminal Rossmann domain. Residues 24–27 (YGSQ), Arg48, Ser51, Ser53, and 83–86 (DELQ) contribute to the NADP(+) site. The active site involves His108. Gly134 contacts NADP(+). In terms of domain architecture, KARI C-terminal knotted spans 183–328 (TFKEECETDL…AKLRDMMPWI (146 aa)). 4 residues coordinate Mg(2+): Asp191, Glu195, Glu227, and Glu231. Ser252 is a binding site for substrate.

It belongs to the ketol-acid reductoisomerase family. It depends on Mg(2+) as a cofactor.

The catalysed reaction is (2R)-2,3-dihydroxy-3-methylbutanoate + NADP(+) = (2S)-2-acetolactate + NADPH + H(+). It catalyses the reaction (2R,3R)-2,3-dihydroxy-3-methylpentanoate + NADP(+) = (S)-2-ethyl-2-hydroxy-3-oxobutanoate + NADPH + H(+). Its pathway is amino-acid biosynthesis; L-isoleucine biosynthesis; L-isoleucine from 2-oxobutanoate: step 2/4. It functions in the pathway amino-acid biosynthesis; L-valine biosynthesis; L-valine from pyruvate: step 2/4. Its function is as follows. Involved in the biosynthesis of branched-chain amino acids (BCAA). Catalyzes an alkyl-migration followed by a ketol-acid reduction of (S)-2-acetolactate (S2AL) to yield (R)-2,3-dihydroxy-isovalerate. In the isomerase reaction, S2AL is rearranged via a Mg-dependent methyl migration to produce 3-hydroxy-3-methyl-2-ketobutyrate (HMKB). In the reductase reaction, this 2-ketoacid undergoes a metal-dependent reduction by NADPH to yield (R)-2,3-dihydroxy-isovalerate. In Bradyrhizobium diazoefficiens (strain JCM 10833 / BCRC 13528 / IAM 13628 / NBRC 14792 / USDA 110), this protein is Ketol-acid reductoisomerase (NADP(+)).